Here is a 228-residue protein sequence, read N- to C-terminus: Small ribosomal subunit protein uS10m (228 aa).

The N-terminal 17 residues, 1–17 (MKRYMFGTLPRVQPKRC), are a transit peptide targeting the mitochondrion.

This sequence belongs to the universal ribosomal protein uS10 family. As to quaternary structure, component of the mitochondrial small ribosomal subunit (mt-SSU). Mature yeast 74S mitochondrial ribosomes consist of a small (37S) and a large (54S) subunit. The 37S small subunit contains a 15S ribosomal RNA (15S mt-rRNA) and at least 32 different proteins. The 54S large subunit contains a 21S rRNA (21S mt-rRNA) and at least 45 different proteins.

The protein localises to the mitochondrion. In terms of biological role, component of the mitochondrial ribosome (mitoribosome), a dedicated translation machinery responsible for the synthesis of mitochondrial genome-encoded proteins, including at least some of the essential transmembrane subunits of the mitochondrial respiratory chain. The mitoribosomes are attached to the mitochondrial inner membrane and translation products are cotranslationally integrated into the membrane. The chain is Small ribosomal subunit protein uS10m (rsm10) from Schizosaccharomyces pombe (strain 972 / ATCC 24843) (Fission yeast).